The sequence spans 671 residues: E3 ubiquitin-protein ligase pub2 (671 aa).

One can recognise a C2 domain in the interval 1 to 112 (MENIRFEVQL…KDDYKTRITL (112 aa)). Positions 242 to 275 (GPLPAGWEMRLSEDYHVYFVDHSTKTTTWSDPRD) constitute a WW domain. The region spanning 338–671 (SVSDMKKKLL…IQETAGFGTE (334 aa)) is the HECT domain. The active-site Glycyl thioester intermediate is Cys-639.

As to quaternary structure, interacts with the E2 ubiquitin-conjugating enzyme ubc4.

Its subcellular location is the membrane. The protein resides in the cytoplasm. The enzyme catalyses S-ubiquitinyl-[E2 ubiquitin-conjugating enzyme]-L-cysteine + [acceptor protein]-L-lysine = [E2 ubiquitin-conjugating enzyme]-L-cysteine + N(6)-ubiquitinyl-[acceptor protein]-L-lysine.. The protein operates within protein modification; protein ubiquitination. E3 ubiquitin-protein ligase which accepts ubiquitin from an E2 ubiquitin-conjugating enzyme in the form of a thioester and then directly transfers the ubiquitin to targeted substrates. The chain is E3 ubiquitin-protein ligase pub2 (pub2) from Schizosaccharomyces pombe (strain 972 / ATCC 24843) (Fission yeast).